The chain runs to 489 residues: uncharacterized protein (489 aa).

This is an uncharacterized protein from Bacillus subtilis (strain 168).